Consider the following 610-residue polypeptide: UvrABC system protein C (610 aa).

The GIY-YIG domain maps to 16–94 (SQPGVYRMYD…IKLYQPRYNV (79 aa)). Residues 204-239 (QQVLTRLIERMEQASQQLKFEDAARYRDQIQAVRQV) form the UVR domain.

It belongs to the UvrC family. Interacts with UvrB in an incision complex.

The protein localises to the cytoplasm. In terms of biological role, the UvrABC repair system catalyzes the recognition and processing of DNA lesions. UvrC both incises the 5' and 3' sides of the lesion. The N-terminal half is responsible for the 3' incision and the C-terminal half is responsible for the 5' incision. The chain is UvrABC system protein C from Photorhabdus laumondii subsp. laumondii (strain DSM 15139 / CIP 105565 / TT01) (Photorhabdus luminescens subsp. laumondii).